A 395-amino-acid polypeptide reads, in one-letter code: Chaperone protein DnaJ (395 aa).

Residues 4–69 enclose the J domain; sequence DYYEVLGVGR…DKRRRYDQFG (66 aa). The CR-type zinc finger occupies 152-233; it reads GVEKTLKIKK…CHGEGIKQGE (82 aa). Residues cysteine 165, cysteine 168, cysteine 181, cysteine 184, cysteine 207, cysteine 210, cysteine 221, and cysteine 224 each coordinate Zn(2+). CXXCXGXG motif repeat units follow at residues 165–172, 181–188, 207–214, and 221–228; these read CDVCNGTG, CPTCQGTG, CPTCGGEG, and CTACHGEG.

It belongs to the DnaJ family. As to quaternary structure, homodimer. Zn(2+) is required as a cofactor.

It is found in the cytoplasm. Its function is as follows. Participates actively in the response to hyperosmotic and heat shock by preventing the aggregation of stress-denatured proteins and by disaggregating proteins, also in an autonomous, DnaK-independent fashion. Unfolded proteins bind initially to DnaJ; upon interaction with the DnaJ-bound protein, DnaK hydrolyzes its bound ATP, resulting in the formation of a stable complex. GrpE releases ADP from DnaK; ATP binding to DnaK triggers the release of the substrate protein, thus completing the reaction cycle. Several rounds of ATP-dependent interactions between DnaJ, DnaK and GrpE are required for fully efficient folding. Also involved, together with DnaK and GrpE, in the DNA replication of plasmids through activation of initiation proteins. This Prosthecochloris aestuarii (strain DSM 271 / SK 413) protein is Chaperone protein DnaJ.